We begin with the raw amino-acid sequence, 929 residues long: Protein unc-45 homolog A (929 aa).

TPR repeat units follow at residues 6 to 39 (VEQLRKEGNELFKCGDYGGALAAYTQALGLDATP), 43 to 76 (AVLHRNRAACYLKLEDYDKAETEASKAIEKDGGD), and 77 to 110 (VKALYRRSQALEKLGRLDQAVLDLQRCVSLEPKN). The residue at position 55 (K55) is an N6-acetyllysine. The residue at position 468 (K468) is an N6-acetyllysine.

In terms of assembly, interacts with PGR isoforms A and B as well as with NR3C1 in the absence of ligand, and with HSP90AB1. Binding to HSP90AB1 involves 2 UNC45A monomers per HSP90AB1 dimer.

Its subcellular location is the cytoplasm. It is found in the perinuclear region. The protein localises to the nucleus. May act as co-chaperone for HSP90 (Potential). Prevents the stimulation of HSP90AB1 ATPase activity by AHSA1. Positive factor in promoting PGR function in the cell. May be necessary for proper folding of myosin (Potential). Necessary for normal cell proliferation. Necessary for normal myotube formation and myosin accumulation during muscle cell development. May play a role in erythropoiesis in stroma cells in the spleen. The sequence is that of Protein unc-45 homolog A (UNC45A) from Pongo abelii (Sumatran orangutan).